The sequence spans 606 residues: Mitogen-activated protein kinase 20 (606 aa).

Residues 25-316 (FKVQEVIGKG…AEEALADPYF (292 aa)) enclose the Protein kinase domain. ATP contacts are provided by residues 31-39 (IGKGSYGVV) and K54. D151 serves as the catalytic Proton acceptor. T187 is subject to Phosphothreonine. A TXY motif is present at residues 187-189 (TDY). Position 189 is a phosphotyrosine (Y189). Residue T192 is modified to Phosphothreonine.

The protein belongs to the protein kinase superfamily. CMGC Ser/Thr protein kinase family. MAP kinase subfamily. Post-translationally, dually phosphorylated on Thr-187 and Tyr-189, which activates the enzyme.

It carries out the reaction L-seryl-[protein] + ATP = O-phospho-L-seryl-[protein] + ADP + H(+). The catalysed reaction is L-threonyl-[protein] + ATP = O-phospho-L-threonyl-[protein] + ADP + H(+). Activated by threonine and tyrosine phosphorylation. The chain is Mitogen-activated protein kinase 20 (MPK20) from Arabidopsis thaliana (Mouse-ear cress).